Here is a 73-residue protein sequence, read N- to C-terminus: UPF0352 protein HD_1515 (73 aa).

It belongs to the UPF0352 family.

This Haemophilus ducreyi (strain 35000HP / ATCC 700724) protein is UPF0352 protein HD_1515.